Reading from the N-terminus, the 125-residue chain is MSMQRLCYVLDLHDDAALIAQYERWHRPSEVWPEVVASLQQAGIAELEIFRSGDRLVMLMTVGEDYDPAAKAARDAGDPRIQAWEALMWRFQKALPGSAPGEKWREAGRIFALSEAVSVQQGSAA.

H13 serves as the catalytic Proton donor.

The protein belongs to the RbsD / FucU family. FucU mutarotase subfamily.

It catalyses the reaction alpha-L-fucose = beta-L-fucose. With respect to regulation, active toward L-galactopyranoside and D-arabinopyranoside but no D-fucopyranoside activity detected. Plays a role in the catabolism of L-fucose. Involved in the anomeric conversion of L-fucose. This Xanthomonas campestris pv. campestris (strain ATCC 33913 / DSM 3586 / NCPPB 528 / LMG 568 / P 25) protein is L-fucose mutarotase.